The following is a 194-amino-acid chain: Peptidyl-tRNA hydrolase (194 aa).

Tyr-17 is a binding site for tRNA. Residue His-22 is the Proton acceptor of the active site. TRNA contacts are provided by Tyr-68, Asn-70, and Asn-116.

Belongs to the PTH family. In terms of assembly, monomer.

Its subcellular location is the cytoplasm. It carries out the reaction an N-acyl-L-alpha-aminoacyl-tRNA + H2O = an N-acyl-L-amino acid + a tRNA + H(+). Functionally, hydrolyzes ribosome-free peptidyl-tRNAs (with 1 or more amino acids incorporated), which drop off the ribosome during protein synthesis, or as a result of ribosome stalling. Its function is as follows. Catalyzes the release of premature peptidyl moieties from peptidyl-tRNA molecules trapped in stalled 50S ribosomal subunits, and thus maintains levels of free tRNAs and 50S ribosomes. This chain is Peptidyl-tRNA hydrolase, found in Pseudomonas paraeruginosa (strain DSM 24068 / PA7) (Pseudomonas aeruginosa (strain PA7)).